The primary structure comprises 291 residues: uncharacterized protein (291 aa).

The disordered stretch occupies residues 1-82 (MEAEKETEQE…SYSSSPFETH (82 aa)). Low complexity-rich tracts occupy residues 28-43 (HSHS…ISAS) and 59-78 (STSS…SSSP).

This is an uncharacterized protein from Arabidopsis thaliana (Mouse-ear cress).